Consider the following 379-residue polypeptide: Queuine tRNA-ribosyltransferase (379 aa).

The Proton acceptor role is filled by Asp94. Substrate is bound by residues 94-98, Asp148, Gln191, and Gly218; that span reads DSGGF. An RNA binding region spans residues 249–255; that stretch reads GVGSPDS. Asp268 functions as the Nucleophile in the catalytic mechanism. The RNA binding; important for wobble base 34 recognition stretch occupies residues 273-277; the sequence is TRIAR. Residues Cys306, Cys308, Cys311, and His337 each coordinate Zn(2+).

It belongs to the queuine tRNA-ribosyltransferase family. As to quaternary structure, homodimer. Within each dimer, one monomer is responsible for RNA recognition and catalysis, while the other monomer binds to the replacement base PreQ1. It depends on Zn(2+) as a cofactor.

The enzyme catalyses 7-aminomethyl-7-carbaguanine + guanosine(34) in tRNA = 7-aminomethyl-7-carbaguanosine(34) in tRNA + guanine. Its pathway is tRNA modification; tRNA-queuosine biosynthesis. In terms of biological role, catalyzes the base-exchange of a guanine (G) residue with the queuine precursor 7-aminomethyl-7-deazaguanine (PreQ1) at position 34 (anticodon wobble position) in tRNAs with GU(N) anticodons (tRNA-Asp, -Asn, -His and -Tyr). Catalysis occurs through a double-displacement mechanism. The nucleophile active site attacks the C1' of nucleotide 34 to detach the guanine base from the RNA, forming a covalent enzyme-RNA intermediate. The proton acceptor active site deprotonates the incoming PreQ1, allowing a nucleophilic attack on the C1' of the ribose to form the product. After dissociation, two additional enzymatic reactions on the tRNA convert PreQ1 to queuine (Q), resulting in the hypermodified nucleoside queuosine (7-(((4,5-cis-dihydroxy-2-cyclopenten-1-yl)amino)methyl)-7-deazaguanosine). The polypeptide is Queuine tRNA-ribosyltransferase (Bacillus cereus (strain G9842)).